Reading from the N-terminus, the 74-residue chain is Anionic peptide clone 10 (74 aa).

The signal sequence occupies residues 1–24 (MVSKSLIVLLLVSVLVSTFFTTEA).

It belongs to the non-disulfide-bridged peptide (NDBP) superfamily. Long chain multifunctional peptide (group 2) family. As to expression, expressed by the venom gland.

Its subcellular location is the secreted. Functionally, may be an antimicrobial peptide. The sequence is that of Anionic peptide clone 10 from Tityus costatus (Brazilian scorpion).